A 213-amino-acid chain; its full sequence is ER lumen protein-retaining receptor erd-2.1 (213 aa).

Residues 1–2 are Lumenal-facing; it reads MN. The chain crosses the membrane as a helical span at residues 3–21; sequence LFRFTADVAHAIAIVVLLL. The Cytoplasmic portion of the chain corresponds to 22–35; sequence KIWKSRSCEGISGR. Residues 36–53 form a helical membrane-spanning segment; the sequence is SQLLFALVFVTRYLDLFT. Over 54-61 the chain is Lumenal; it reads NFFSFYNT. The helical transmembrane segment at 62–80 threads the bilayer; that stretch reads AMKIFYLVASFGTVYLMWA. Over 81 to 96 the chain is Cytoplasmic; sequence KFKATYDRNNDSFRIE. A helical transmembrane segment spans residues 97–110; sequence FLVIPSMILALLIN. Topologically, residues 111 to 117 are lumenal; sequence HEFIFME. A helical membrane pass occupies residues 118–137; it reads VMWTFSIYLEAVAIMPQLFM. At 138–149 the chain is on the cytoplasmic side; sequence LSRTGNAETITA. Residues 150 to 168 traverse the membrane as a helical segment; it reads HYLFALGSYRFLYILNWVY. The Lumenal portion of the chain corresponds to 169-178; sequence RYYTESFFDP. A helical transmembrane segment spans residues 179-199; that stretch reads ISVVAGIVQTVLYADFFYLYI. Residues 200–213 lie on the Cytoplasmic side of the membrane; it reads TRVIQSNRQFEMSA.

The protein belongs to the ERD2 family.

It is found in the endoplasmic reticulum membrane. In terms of biological role, required for the retention of luminal endoplasmic reticulum proteins. Determines the specificity of the luminal ER protein retention system. Also required for normal vesicular traffic through the Golgi. The chain is ER lumen protein-retaining receptor erd-2.1 from Caenorhabditis elegans.